The chain runs to 406 residues: Cysteine desulfurase (406 aa).

K226 carries the post-translational modification N6-(pyridoxal phosphate)lysine. The active-site Cysteine persulfide intermediate is the C364.

The protein belongs to the class-V pyridoxal-phosphate-dependent aminotransferase family. Csd subfamily. In terms of assembly, homodimer. Interacts with SufE and the SufBCD complex composed of SufB, SufC and SufD. The interaction with SufE is required to mediate the direct transfer of the sulfur atom from the S-sulfanylcysteine. Requires pyridoxal 5'-phosphate as cofactor.

Its subcellular location is the cytoplasm. The enzyme catalyses (sulfur carrier)-H + L-cysteine = (sulfur carrier)-SH + L-alanine. It catalyses the reaction L-selenocysteine + AH2 = hydrogenselenide + L-alanine + A + H(+). It participates in cofactor biosynthesis; iron-sulfur cluster biosynthesis. In terms of biological role, cysteine desulfurases mobilize the sulfur from L-cysteine to yield L-alanine, an essential step in sulfur metabolism for biosynthesis of a variety of sulfur-containing biomolecules. Component of the suf operon, which is activated and required under specific conditions such as oxidative stress and iron limitation. Acts as a potent selenocysteine lyase in vitro, that mobilizes selenium from L-selenocysteine. Selenocysteine lyase activity is however unsure in vivo. The protein is Cysteine desulfurase of Klebsiella pneumoniae subsp. pneumoniae (strain ATCC 700721 / MGH 78578).